Consider the following 415-residue polypeptide: Serine hydroxymethyltransferase (415 aa).

(6S)-5,6,7,8-tetrahydrofolate-binding positions include Leu117 and 121-123 (GHL). Lys226 carries the N6-(pyridoxal phosphate)lysine modification. Residues Glu241 and 349–351 (SPF) each bind (6S)-5,6,7,8-tetrahydrofolate.

Belongs to the SHMT family. As to quaternary structure, homodimer. Pyridoxal 5'-phosphate serves as cofactor.

It is found in the cytoplasm. The enzyme catalyses (6R)-5,10-methylene-5,6,7,8-tetrahydrofolate + glycine + H2O = (6S)-5,6,7,8-tetrahydrofolate + L-serine. It functions in the pathway one-carbon metabolism; tetrahydrofolate interconversion. Its pathway is amino-acid biosynthesis; glycine biosynthesis; glycine from L-serine: step 1/1. In terms of biological role, catalyzes the reversible interconversion of serine and glycine with tetrahydrofolate (THF) serving as the one-carbon carrier. This reaction serves as the major source of one-carbon groups required for the biosynthesis of purines, thymidylate, methionine, and other important biomolecules. Also exhibits THF-independent aldolase activity toward beta-hydroxyamino acids, producing glycine and aldehydes, via a retro-aldol mechanism. This chain is Serine hydroxymethyltransferase, found in Geotalea daltonii (strain DSM 22248 / JCM 15807 / FRC-32) (Geobacter daltonii).